The primary structure comprises 379 residues: Cobalt-precorrin-5B C(1)-methyltransferase (379 aa).

Belongs to the CbiD family.

The catalysed reaction is Co-precorrin-5B + S-adenosyl-L-methionine = Co-precorrin-6A + S-adenosyl-L-homocysteine. Its pathway is cofactor biosynthesis; adenosylcobalamin biosynthesis; cob(II)yrinate a,c-diamide from sirohydrochlorin (anaerobic route): step 6/10. Its function is as follows. Catalyzes the methylation of C-1 in cobalt-precorrin-5B to form cobalt-precorrin-6A. This Salmonella typhimurium (strain LT2 / SGSC1412 / ATCC 700720) protein is Cobalt-precorrin-5B C(1)-methyltransferase.